The following is a 356-amino-acid chain: UDP-N-acetylglucosamine--N-acetylmuramyl-(pentapeptide) pyrophosphoryl-undecaprenol N-acetylglucosamine transferase (356 aa).

UDP-N-acetyl-alpha-D-glucosamine-binding positions include 11–13, Asn123, Arg159, and Ser192; that span reads TAG.

This sequence belongs to the glycosyltransferase 28 family. MurG subfamily.

It localises to the cell membrane. It carries out the reaction di-trans,octa-cis-undecaprenyl diphospho-N-acetyl-alpha-D-muramoyl-L-alanyl-D-glutamyl-meso-2,6-diaminopimeloyl-D-alanyl-D-alanine + UDP-N-acetyl-alpha-D-glucosamine = di-trans,octa-cis-undecaprenyl diphospho-[N-acetyl-alpha-D-glucosaminyl-(1-&gt;4)]-N-acetyl-alpha-D-muramoyl-L-alanyl-D-glutamyl-meso-2,6-diaminopimeloyl-D-alanyl-D-alanine + UDP + H(+). It participates in cell wall biogenesis; peptidoglycan biosynthesis. In terms of biological role, cell wall formation. Catalyzes the transfer of a GlcNAc subunit on undecaprenyl-pyrophosphoryl-MurNAc-pentapeptide (lipid intermediate I) to form undecaprenyl-pyrophosphoryl-MurNAc-(pentapeptide)GlcNAc (lipid intermediate II). This Tropheryma whipplei (strain Twist) (Whipple's bacillus) protein is UDP-N-acetylglucosamine--N-acetylmuramyl-(pentapeptide) pyrophosphoryl-undecaprenol N-acetylglucosamine transferase.